Here is a 223-residue protein sequence, read N- to C-terminus: Adenine phosphoribosyltransferase (223 aa).

The protein belongs to the purine/pyrimidine phosphoribosyltransferase family. Homodimer.

Its subcellular location is the cytoplasm. It carries out the reaction AMP + diphosphate = 5-phospho-alpha-D-ribose 1-diphosphate + adenine. The protein operates within purine metabolism; AMP biosynthesis via salvage pathway; AMP from adenine: step 1/1. Functionally, catalyzes a salvage reaction resulting in the formation of AMP, that is energically less costly than de novo synthesis. The polypeptide is Adenine phosphoribosyltransferase (Mycobacterium bovis (strain ATCC BAA-935 / AF2122/97)).